Consider the following 303-residue polypeptide: Putative ankyrin repeat protein R601 (303 aa).

ANK repeat units follow at residues D86–V115, N117–V146, D147–S176, and N200–Y233.

This is Putative ankyrin repeat protein R601 from Acanthamoeba polyphaga (Amoeba).